Consider the following 204-residue polypeptide: Holliday junction resolvase RecU (204 aa).

The disordered stretch occupies residues 1–24 (MTIHYPNGQQPVQHYNTHNELPTP). Polar residues predominate over residues 7–24 (NGQQPVQHYNTHNELPTP). 4 residues coordinate Mg(2+): T87, D89, D102, and Q121.

The protein belongs to the RecU family. It depends on Mg(2+) as a cofactor.

The protein resides in the cytoplasm. The catalysed reaction is Endonucleolytic cleavage at a junction such as a reciprocal single-stranded crossover between two homologous DNA duplexes (Holliday junction).. Endonuclease that resolves Holliday junction intermediates in genetic recombination. Cleaves mobile four-strand junctions by introducing symmetrical nicks in paired strands. Promotes annealing of linear ssDNA with homologous dsDNA. Required for DNA repair, homologous recombination and chromosome segregation. This Limosilactobacillus reuteri (strain DSM 20016) (Lactobacillus reuteri) protein is Holliday junction resolvase RecU.